A 75-amino-acid polypeptide reads, in one-letter code: Pi-hexatoxin-Hi1b (75 aa).

6 cysteine pairs are disulfide-bonded: cysteine 3–cysteine 18, cysteine 10–cysteine 23, cysteine 17–cysteine 33, cysteine 40–cysteine 55, cysteine 47–cysteine 60, and cysteine 54–cysteine 71. Domain repeat units follow at residues 3 to 33 and 40 to 71; these read CIRK…FEVC and CLVK…SSVC. The 2 X approximate repeats with cysteine pattern C-C-CC-C-C stretch occupies residues 3 to 71; that stretch reads CIRKWLSCVD…KRSGNKSSVC (69 aa).

The protein belongs to the psalmotoxin-1 family. Double-knot toxin subfamily. Expressed by the venom gland.

Its subcellular location is the secreted. This toxin potently and selectively inhibits ASIC1a, an isoform of the gene ASIC1. It incompletely inhibits ASIC1a activation in a pH-independent and slowly reversible manner. This toxin acts by binding to and stabilizing the closed state of the channel, thereby impeding the transition into a conducting state. This toxin may bind to the acidic pocket of ASIC1a, since mutation of a key residue of this pocket (Arg-350) abolishes the ability of the toxin to inhibit ASIC1a. In vivo, this toxin protects the brain from neuronal injury when administered up to 8 hours after stroke onset. The sequence is that of Pi-hexatoxin-Hi1b from Hadronyche infensa (Fraser island funnel-web spider).